The following is a 183-amino-acid chain: Peptidyl-tRNA hydrolase (183 aa).

Position 14 (Tyr14) interacts with tRNA. The active-site Proton acceptor is His19. Tyr60 and Asn62 together coordinate tRNA.

The protein belongs to the PTH family. Monomer.

The protein resides in the cytoplasm. It carries out the reaction an N-acyl-L-alpha-aminoacyl-tRNA + H2O = an N-acyl-L-amino acid + a tRNA + H(+). Hydrolyzes ribosome-free peptidyl-tRNAs (with 1 or more amino acids incorporated), which drop off the ribosome during protein synthesis, or as a result of ribosome stalling. Its function is as follows. Catalyzes the release of premature peptidyl moieties from peptidyl-tRNA molecules trapped in stalled 50S ribosomal subunits, and thus maintains levels of free tRNAs and 50S ribosomes. The chain is Peptidyl-tRNA hydrolase from Mycoplasmoides gallisepticum (strain R(low / passage 15 / clone 2)) (Mycoplasma gallisepticum).